Here is a 103-residue protein sequence, read N- to C-terminus: Large ribosomal subunit protein bL21 (103 aa).

This sequence belongs to the bacterial ribosomal protein bL21 family. Part of the 50S ribosomal subunit. Contacts protein L20.

This protein binds to 23S rRNA in the presence of protein L20. This chain is Large ribosomal subunit protein bL21, found in Klebsiella pneumoniae (strain 342).